The following is a 467-amino-acid chain: MSTQHSGDKLWGGRFSEPTDAFVEAFTASVSFDQRLYRHDIQGSKAHARMLARVGVLTEEECDKIHDGLDAILADIERGDFAWSVELEDVHMNVEARLIERIGDVGKKLHTGRSRNDQVATDIRLYLREAIDALMQEIRRLQGGLVDLAEREAQTIMPGFTHLQTAQPVTFGHHMMAWYEMLERDHGRLADCRKRVNVLPLGAAALAGTPYPLDRHYTAELLGFDAVTDNSLDAVSDRDFAIEFCAAGALIMTHLSRFSEELILWASAQFGFVDLPDRFCTGSSIMPQKKNPDVPELVRGKTGRANGNLIALLTLMKGQPLAYNKDNQEDKEPLFDTVDTLAGSLRAFADMVPHIQVRAEVMRAAASRGFATATDLADYLVRRGMPFRDAHEVVGRAVRHGVETGKDLAEMSLDELRKFSKTIEQDVFEVLTLEGSVAARNVHGGTAPAQVRARIRAARAKLMPAKG.

Belongs to the lyase 1 family. Argininosuccinate lyase subfamily.

Its subcellular location is the cytoplasm. The enzyme catalyses 2-(N(omega)-L-arginino)succinate = fumarate + L-arginine. It participates in amino-acid biosynthesis; L-arginine biosynthesis; L-arginine from L-ornithine and carbamoyl phosphate: step 3/3. The chain is Argininosuccinate lyase from Thioalkalivibrio sulfidiphilus (strain HL-EbGR7).